The following is a 210-amino-acid chain: Vacuolar protein sorting-associated protein 2 homolog 3 (210 aa).

The disordered stretch occupies residues 1–23 (MNIFTKKPNPREVLRESKREMTQ). A compositionally biased stretch (basic and acidic residues) spans 9–23 (NPREVLRESKREMTQ). A coiled-coil region spans residues 28–84 (IEKEIGSLQSEEKKLVLEIKRTAKSGNEGATKILARQLIRLRQQIANLQGSRAQMRG). The disordered stretch occupies residues 178-200 (LSSAPKGKIGGKKAEDVGSSGID).

This sequence belongs to the SNF7 family. Component of the endosomal sorting required for transport complex III (ESCRT-III), composed at least of VPS2, VPS20, VPS24 and VPS32.

It localises to the endosome. Component of the ESCRT-III complex, which is required for multivesicular bodies (MVBs) formation and sorting of endosomal cargo proteins into MVBs. The ESCRT-III complex is probably involved in the concentration of MVB cargo. The sequence is that of Vacuolar protein sorting-associated protein 2 homolog 3 (VPS2.3) from Arabidopsis thaliana (Mouse-ear cress).